The following is a 374-amino-acid chain: uncharacterized protein (374 aa).

The first 21 residues, 1–21, serve as a signal peptide directing secretion; that stretch reads MSIISRVCIPCAVLLFAQLHA. In terms of domain architecture, Fibronectin type-III spans 22–102; it reads KELVHVSQLK…ASASAWTSLS (81 aa).

This is an uncharacterized protein from Treponema pallidum (strain Nichols).